The chain runs to 388 residues: Chalcone synthase D (388 aa).

Residue cysteine 164 is part of the active site.

It belongs to the thiolase-like superfamily. Chalcone/stilbene synthases family.

It carries out the reaction (E)-4-coumaroyl-CoA + 3 malonyl-CoA + 3 H(+) = 2',4,4',6'-tetrahydroxychalcone + 3 CO2 + 4 CoA. The protein operates within secondary metabolite biosynthesis; flavonoid biosynthesis. In terms of biological role, the primary product of this enzyme is 4,2',4',6'-tetrahydroxychalcone (also termed naringenin-chalcone or chalcone) which can under specific conditions spontaneously isomerize into naringenin. The chain is Chalcone synthase D (CHSD) from Ipomoea nil (Japanese morning glory).